A 37-amino-acid chain; its full sequence is Photosystem I reaction center subunit IX (37 aa).

Residues 4–24 (FLTTAPVVAAIWFTLTAGILI) traverse the membrane as a helical segment.

This sequence belongs to the PsaJ family.

Its subcellular location is the cellular thylakoid membrane. Functionally, may help in the organization of the PsaE and PsaF subunits. This Synechococcus sp. (strain WH7803) protein is Photosystem I reaction center subunit IX.